The primary structure comprises 1032 residues: Serine/threonine-protein kinase ppk31 (1032 aa).

Positions 3–72 (NPEQLKRILS…KATDNLFRKS (70 aa)) constitute a PAS domain. Residues 528 to 877 (FILLKEINRG…YQEIKKHPFF (350 aa)) enclose the Protein kinase domain. ATP contacts are provided by residues 534–542 (INRGAYGRV) and lysine 557. Aspartate 652 functions as the Proton acceptor in the catalytic mechanism. The disordered stretch occupies residues 938-963 (PKATPADSGTETSNSAAFSASEEETT). Over residues 947 to 957 (TETSNSAAFSA) the composition is skewed to low complexity.

The protein belongs to the protein kinase superfamily. Ser/Thr protein kinase family.

Its subcellular location is the cytoplasm. It catalyses the reaction L-seryl-[protein] + ATP = O-phospho-L-seryl-[protein] + ADP + H(+). The catalysed reaction is L-threonyl-[protein] + ATP = O-phospho-L-threonyl-[protein] + ADP + H(+). Its function is as follows. Has a role in meiosis. The polypeptide is Serine/threonine-protein kinase ppk31 (ppk31) (Schizosaccharomyces pombe (strain 972 / ATCC 24843) (Fission yeast)).